A 64-amino-acid chain; its full sequence is LGVLLPICLLLFPLTALPLDGDQPADRPAERMQDDFITEQHPLFDPVKRCCDWPCNAGCVPCCF.

A signal peptide spans 1-16; that stretch reads LGVLLPICLLLFPLTA. Positions 17–49 are excised as a propeptide; that stretch reads LPLDGDQPADRPAERMQDDFITEQHPLFDPVKR. Disulfide bonds link Cys-50-Cys-63, Cys-51-Cys-59, and Cys-55-Cys-62. Residue Pro-61 is modified to 4-hydroxyproline.

It belongs to the conotoxin M superfamily. In terms of tissue distribution, expressed by the venom duct.

It is found in the secreted. The protein is Conotoxin Pu3.4 of Conus pulicarius (Flea-bitten cone).